A 373-amino-acid chain; its full sequence is 3 beta-hydroxysteroid dehydrogenase/Delta 5--&gt;4-isomerase type 2 (373 aa).

Tyr155 (proton acceptor) is an active-site residue. Residue Lys159 coordinates NAD(+). Residues 288–308 (LPLLYWLAFLLETVSFLLRPF) form a helical membrane-spanning segment.

It belongs to the 3-beta-HSD family. In terms of tissue distribution, adrenal glands, testes and ovaries.

It is found in the endoplasmic reticulum membrane. The protein localises to the mitochondrion membrane. The catalysed reaction is a 3beta-hydroxy-Delta(5)-steroid + NAD(+) = a 3-oxo-Delta(5)-steroid + NADH + H(+). It carries out the reaction a 3-oxo-Delta(5)-steroid = a 3-oxo-Delta(4)-steroid. It functions in the pathway lipid metabolism; steroid biosynthesis. Functionally, 3-beta-HSD is a bifunctional enzyme, that catalyzes the oxidative conversion of Delta(5)-ene-3-beta-hydroxy steroid, and the oxidative conversion of ketosteroids. The 3-beta-HSD enzymatic system plays a crucial role in the biosynthesis of all classes of hormonal steroids. The polypeptide is 3 beta-hydroxysteroid dehydrogenase/Delta 5--&gt;4-isomerase type 2 (Hsd3b) (Rattus norvegicus (Rat)).